The following is a 528-amino-acid chain: Tyrosine--tRNA ligase, cytoplasmic (528 aa).

Residue Met1 is modified to N-acetylmethionine. N-acetylglycine; in Tyrosine--tRNA ligase, cytoplasmic, N-terminally processed is present on Gly2. Tyr39 serves as a coordination point for L-tyrosine. A trans-resveratrol-binding site is contributed by Tyr39. The 'HIGH' region motif lies at 44-52 (TTGKPHVAY). Residues Tyr166, Gln170, Asp173, and Gln188 each contribute to the L-tyrosine site. Trans-resveratrol is bound by residues Gln170 and Asp173. Lys197 carries the post-translational modification N6-acetyllysine. Position 205 is a phosphoserine (Ser205). At Lys206 the chain carries N6-acetyllysine. Residues 222-226 (KMSSS) carry the 'KMSKS' region motif. The short motif at 242–247 (KKKLKK) is the Nuclear localization signal element. The interval 339-363 (AAYPDPSKQKPTAKGPAKSSEPEEI) is disordered. Residues 364–468 (IPSRLDIRVG…AGSAPGERVF (105 aa)) form the tRNA-binding domain. At Ser386 the chain carries Phosphoserine. Residues Lys474, Lys482, and Lys490 each carry the N6-acetyllysine modification.

This sequence belongs to the class-I aminoacyl-tRNA synthetase family. Homodimer. Interacts (when binding to resveratrol) with PARP1; interaction stimulates the poly-ADP-ribosyltransferase activity of PARP1.

It is found in the cytoplasm. The protein localises to the nucleus. The catalysed reaction is tRNA(Tyr) + L-tyrosine + ATP = L-tyrosyl-tRNA(Tyr) + AMP + diphosphate + H(+). Its activity is regulated as follows. Resveratrol strongly inhibits the tyrosine--tRNA ligase activity. Its function is as follows. Tyrosine--tRNA ligase that catalyzes the attachment of tyrosine to tRNA(Tyr) in a two-step reaction: tyrosine is first activated by ATP to form Tyr-AMP and then transferred to the acceptor end of tRNA(Tyr). Also acts as a positive regulator of poly-ADP-ribosylation in the nucleus, independently of its tyrosine--tRNA ligase activity. Activity is switched upon resveratrol-binding: resveratrol strongly inhibits the tyrosine--tRNA ligase activity and promotes relocalization to the nucleus, where YARS1 specifically stimulates the poly-ADP-ribosyltransferase activity of PARP1. This chain is Tyrosine--tRNA ligase, cytoplasmic (Yars1), found in Rattus norvegicus (Rat).